Consider the following 202-residue polypeptide: Phosphatidyl-N-methylethanolamine N-methyltransferase (202 aa).

The Lumenal segment spans residues 1–12; it reads MTTLSDYVDFSQ. An intramembrane region (helical) is located at residues 13-33; sequence DSFKYAALSIAFNPIFWNVVA. At 34 to 45 the chain is on the lumenal side; the sequence is RAEYRSHFLTRI. The chain crosses the membrane as a helical span at residues 46-66; the sequence is FGSPYRGCYFLAITIFSLGIL. Over 67–90 the chain is Cytoplasmic; sequence RDHIYQQALEDQPYYAPVHQPVLG. The helical transmembrane segment at 91–111 threads the bilayer; the sequence is GALFAVGSVLVLSSMYALGVT. Residue 95–97 participates in S-adenosyl-L-methionine binding; the sequence is AVG. The Lumenal portion of the chain corresponds to 112 to 154; it reads GTYLGDYFGILMDAPVTGFPFNVTGSPMYWGSTLNFLGVALYK. The chain crosses the membrane as a helical span at residues 155-175; it reads GKVAGILLTALVFVLYWFALK. Residues 176-202 are Cytoplasmic-facing; that stretch reads WEDPFTAEIYAKRERERAKSKRGGKNQ. 177 to 178 contributes to the S-adenosyl-L-methionine binding site; sequence ED.

The protein belongs to the class VI-like SAM-binding methyltransferase superfamily. PEMT/PEM2 methyltransferase family.

The protein resides in the endoplasmic reticulum membrane. It localises to the mitochondrion membrane. The catalysed reaction is a 1,2-diacyl-sn-glycero-3-phospho-N-methylethanolamine + S-adenosyl-L-methionine = a 1,2-diacyl-sn-glycero-3-phospho-N,N-dimethylethanolamine + S-adenosyl-L-homocysteine + H(+). The enzyme catalyses a 1,2-diacyl-sn-glycero-3-phospho-N,N-dimethylethanolamine + S-adenosyl-L-methionine = a 1,2-diacyl-sn-glycero-3-phosphocholine + S-adenosyl-L-homocysteine + H(+). The protein operates within phospholipid metabolism; phosphatidylcholine biosynthesis. Its function is as follows. Catalyzes the second two steps of the methylation pathway of phosphatidylcholine biosynthesis, the SAM-dependent methylation of phosphatidylmonomethylethanolamine (PMME) to phosphatidyldimethylethanolamine (PDME) and of PDME to phosphatidylcholine (PC). The chain is Phosphatidyl-N-methylethanolamine N-methyltransferase from Emericella nidulans (strain FGSC A4 / ATCC 38163 / CBS 112.46 / NRRL 194 / M139) (Aspergillus nidulans).